Consider the following 438-residue polypeptide: Rhomboid-related protein 1 (438 aa).

The disordered stretch occupies residues 1–62 (MGRVEDGGTT…PSQPGPALWS (62 aa)). Acidic residues predominate over residues 8-17 (GTTEELEDWD). 7 helical membrane-spanning segments follow: residues 196-216 (PPVF…CYGA), 262-282 (GFNA…HGLL), 284-304 (ISLL…ITDM), 308-328 (VVGG…NVVM), 340-359 (LRMV…AVWL), 372-392 (PSFM…LTIL), and 405-425 (WWVV…WNVF). Catalysis depends on serine 312, which acts as the Nucleophile. Histidine 377 is a catalytic residue.

The protein belongs to the peptidase S54 family. Detected in heart, brain, skeletal muscle and kidney.

Its subcellular location is the membrane. It catalyses the reaction Cleaves type-1 transmembrane domains using a catalytic dyad composed of serine and histidine that are contributed by different transmembrane domains.. Its function is as follows. May be involved in regulated intramembrane proteolysis and the subsequent release of functional polypeptides from their membrane anchors. The chain is Rhomboid-related protein 1 (RHBDL1) from Homo sapiens (Human).